Reading from the N-terminus, the 567-residue chain is Inactive protein kinase SELMODRAFT_444075 (567 aa).

The tract at residues 148 to 206 (NETRRKGPSPSEVLNSTTSSPASHKPQVLNDFLRMKESREYTEETDTQRNVSRPVDRVS) is disordered. The segment covering 159 to 169 (EVLNSTTSSPA) has biased composition (polar residues). Over residues 180-189 (LRMKESREYT) the composition is skewed to basic and acidic residues. Residues 196–206 (RNVSRPVDRVS) show a composition bias toward low complexity. A Protein kinase domain is found at 255-487 (FSDVNFLAEG…EGDSLSDTSL (233 aa)). Residues 261 to 269 (LAEGGYGSV) and K283 each bind ATP. The span at 511–538 (DSSSSRSSSASSVLKSFSRTQHSSRSSS) shows a compositional bias: low complexity. The interval 511–567 (DSSSSRSSSASSVLKSFSRTQHSSRSSSNAGSPLNPAATQALAFKKYNKNTTRHTQD) is disordered. The segment covering 556–567 (KYNKNTTRHTQD) has biased composition (basic residues).

The protein is Inactive protein kinase SELMODRAFT_444075 of Selaginella moellendorffii (Spikemoss).